Reading from the N-terminus, the 293-residue chain is Diaminopimelate epimerase (293 aa).

3 residues coordinate substrate: Asn-17, Gln-49, and Asn-69. The active-site Proton donor is the Cys-78. Substrate-binding positions include 79-80, Asn-169, Asn-203, and 221-222; these read GN and ER. Catalysis depends on Cys-230, which acts as the Proton acceptor. 231 to 232 serves as a coordination point for substrate; that stretch reads GS.

Belongs to the diaminopimelate epimerase family. Homodimer.

The protein localises to the cytoplasm. It carries out the reaction (2S,6S)-2,6-diaminopimelate = meso-2,6-diaminopimelate. The protein operates within amino-acid biosynthesis; L-lysine biosynthesis via DAP pathway; DL-2,6-diaminopimelate from LL-2,6-diaminopimelate: step 1/1. In terms of biological role, catalyzes the stereoinversion of LL-2,6-diaminopimelate (L,L-DAP) to meso-diaminopimelate (meso-DAP), a precursor of L-lysine and an essential component of the bacterial peptidoglycan. This is Diaminopimelate epimerase from Methylobacterium sp. (strain 4-46).